Consider the following 498-residue polypeptide: MQGTKIRLLAGGLLMMATAGYVQADALQPDPAWQQGTLSNGLQWQVLTTPQRPSDRVEIRLLVNTGSLAESTQQSGYSHAIPRIALTQSGGLDAAQARSLWQQGIDPKRPMPPVIVSYDTTLFNLSLPNNRNDLLKEALSYLANATGKLTITPETINHALQSQDMVATWPADTKEGWWRYRLKGSTLLGHDPADPLKQPVEAEKIKDFYQKWYTPDAMTLLVVGNVDARSVVDQINKTFGELKGKRETPAPVPTLSPLRAEAVSIMTDAVRQDRLSIMWDTPWQPIRESAALLRYWRADLAREALFWHVQQALSASNSKDIGLGFDCRVLYLRAQCAINIESPNDKLNSNLNLVARELAKVRDKGLPEEEFNALVAQKKLELQKLFAAYARADTDILMGQRMRSLQNQVVDIAPEQYQKLRQDFLNSLTVEMLNQDLRQQLSNDMALILLQPKGEPEFNMKALQAVWDQIMAPSTAAATTSVATDDVHPEVTDIPPAQ.

The first 24 residues, 1-24 (MQGTKIRLLAGGLLMMATAGYVQA), serve as a signal peptide directing secretion.

It belongs to the peptidase M16 family.

Its subcellular location is the periplasm. This is Protein YhjJ (yhjJ) from Escherichia coli (strain K12).